We begin with the raw amino-acid sequence, 160 residues long: Deoxyuridine 5'-triphosphate nucleotidohydrolase (160 aa).

Residues 79-81 (RSG), N92, 96-98 (TVD), and K106 contribute to the substrate site.

Belongs to the dUTPase family. Mg(2+) is required as a cofactor.

The enzyme catalyses dUTP + H2O = dUMP + diphosphate + H(+). It participates in pyrimidine metabolism; dUMP biosynthesis; dUMP from dCTP (dUTP route): step 2/2. In terms of biological role, this enzyme is involved in nucleotide metabolism: it produces dUMP, the immediate precursor of thymidine nucleotides and it decreases the intracellular concentration of dUTP so that uracil cannot be incorporated into DNA. This Sinorhizobium medicae (strain WSM419) (Ensifer medicae) protein is Deoxyuridine 5'-triphosphate nucleotidohydrolase.